The following is a 122-amino-acid chain: Large ribosomal subunit protein uL14 (122 aa).

The protein belongs to the universal ribosomal protein uL14 family. As to quaternary structure, part of the 50S ribosomal subunit. Forms a cluster with proteins L3 and L19. In the 70S ribosome, L14 and L19 interact and together make contacts with the 16S rRNA in bridges B5 and B8.

In terms of biological role, binds to 23S rRNA. Forms part of two intersubunit bridges in the 70S ribosome. The sequence is that of Large ribosomal subunit protein uL14 from Streptococcus suis (strain 05ZYH33).